The sequence spans 455 residues: UDP-N-acetylmuramoylalanine--D-glutamate ligase (455 aa).

112 to 118 (GTNGKTT) is an ATP binding site.

This sequence belongs to the MurCDEF family.

The protein resides in the cytoplasm. It catalyses the reaction UDP-N-acetyl-alpha-D-muramoyl-L-alanine + D-glutamate + ATP = UDP-N-acetyl-alpha-D-muramoyl-L-alanyl-D-glutamate + ADP + phosphate + H(+). Its pathway is cell wall biogenesis; peptidoglycan biosynthesis. In terms of biological role, cell wall formation. Catalyzes the addition of glutamate to the nucleotide precursor UDP-N-acetylmuramoyl-L-alanine (UMA). This is UDP-N-acetylmuramoylalanine--D-glutamate ligase from Trichormus variabilis (strain ATCC 29413 / PCC 7937) (Anabaena variabilis).